The primary structure comprises 339 residues: Anthranilate phosphoribosyltransferase (339 aa).

5-phospho-alpha-D-ribose 1-diphosphate-binding positions include G81, 84 to 85 (GD), S89, 91 to 94 (NVST), 109 to 117 (KHGNRALSS), and A121. G81 provides a ligand contact to anthranilate. Residue S93 participates in Mg(2+) binding. N112 is an anthranilate binding site. R167 contributes to the anthranilate binding site. Positions 226 and 227 each coordinate Mg(2+).

The protein belongs to the anthranilate phosphoribosyltransferase family. Homodimer. The cofactor is Mg(2+).

It catalyses the reaction N-(5-phospho-beta-D-ribosyl)anthranilate + diphosphate = 5-phospho-alpha-D-ribose 1-diphosphate + anthranilate. It functions in the pathway amino-acid biosynthesis; L-tryptophan biosynthesis; L-tryptophan from chorismate: step 2/5. In terms of biological role, catalyzes the transfer of the phosphoribosyl group of 5-phosphorylribose-1-pyrophosphate (PRPP) to anthranilate to yield N-(5'-phosphoribosyl)-anthranilate (PRA). The protein is Anthranilate phosphoribosyltransferase of Rhodopseudomonas palustris (strain BisA53).